Consider the following 491-residue polypeptide: Neuronal acetylcholine receptor subunit beta-2 (491 aa).

Residues 1-18 (MALLRVLCLLAALRRSLC) form the signal peptide. At 19–226 (TDTEERLVEY…ITYDFIIRRK (208 aa)) the chain is on the extracellular side. N-linked (GlcNAc...) asparagine glycosylation is found at N44 and N161. Residues C148 and C162 are joined by a disulfide bond. The chain crosses the membrane as a helical span at residues 227–251 (PLFYTINLIIPCILITSLAILVFYL). At 252 to 258 (PSDCGEK) the chain is on the cytoplasmic side. Residues 259-277 (MTLCISVLLALTVFLLLIS) form a helical membrane-spanning segment. The Extracellular segment spans residues 278 to 292 (KIVPPTSLDVPLVGK). A helical transmembrane segment spans residues 293-314 (YLMFTMVLVTFSIVTSVCVLNV). At 315 to 449 (HHRSPTTHTM…WKYVAMVIDR (135 aa)) the chain is on the cytoplasmic side. Residues 450 to 468 (LFLWIFVFVCVFGTVGMFL) traverse the membrane as a helical segment.

It belongs to the ligand-gated ion channel (TC 1.A.9) family. Acetylcholine receptor (TC 1.A.9.1) subfamily. Beta-2/CHRNB2 sub-subfamily. In terms of assembly, neuronal AChR is a heteropentamer composed of two different types of subunits: alpha and beta. CHRNB2/Beta-2 subunit can be combined to CHRNA2/alpha-2, CHRNA3/alpha-3 or CHRNA4/alpha-4, CHRNA5/alpha-5, CHRNA6/alpha-6 and CHRNB3/beta-3 to give rise to functional receptors.

Its subcellular location is the synaptic cell membrane. It is found in the cell membrane. It carries out the reaction Ca(2+)(in) = Ca(2+)(out). It catalyses the reaction K(+)(in) = K(+)(out). The catalysed reaction is Na(+)(in) = Na(+)(out). Its activity is regulated as follows. Activated by a myriad of ligands such as acetylcholine, cytisine, nicotine, choline and epibatidine. nAChR activity is inhibited by the antagonist alpha-conotoxins BuIA, PnIA, PnIC, GID and MII, small disulfide-constrained peptides from cone snails. Its function is as follows. Component of neuronal acetylcholine receptors (nAChRs) that function as pentameric, ligand-gated cation channels with high calcium permeability among other activities. nAChRs are excitatory neurotrasnmitter receptors formed by a collection of nAChR subunits known to mediate synaptic transmission in the nervous system and the neuromuscular junction. Each nAchR subunit confers differential attributes to channel properties, including activation, deactivation and desensitization kinetics, pH sensitivity, cation permeability, and binding to allosteric modulators. CHRNB2 forms heteropentameric neuronal acetylcholine receptors with CHRNA2, CHRNA3, CHRNA4 and CHRNA6, as well as CHRNA5 and CHRNB3 as accesory subunits. The sequence is that of Neuronal acetylcholine receptor subunit beta-2 (CHRNB2) from Gallus gallus (Chicken).